The chain runs to 497 residues: 5'-AMP-activated protein kinase subunit gamma-3 (497 aa).

The tract at residues 16–143 (STQTPSWSSF…SSSSTDDLDQ (128 aa)) is disordered. Residues 39–54 (GDSTSWPSPAMTTSAE) are compositionally biased toward polar residues. A compositionally biased stretch (basic and acidic residues) spans 68–79 (KSQEDVEERELP). CBS domains lie at 204–265 (MATS…RSPL), 287–345 (CFKP…QRTL), and 363–423 (TFRD…HLDI). ADP is bound by residues Arg-232, 247–252 (MLTITD), Val-292, 313–314 (HR), and Lys-332. AMP-binding positions include Arg-232, 247-252 (MLTITD), Val-292, His-313, 313-314 (HR), Lys-332, Thr-363, Ala-368, 389-390 (SA), 405-408 (SRFD), Arg-432, Leu-440, His-461, 461-462 (HR), and 477-480 (SLSD). Residues Arg-232, 247–252 (MLTITD), Val-292, 313–314 (HR), Arg-314, and Lys-332 contribute to the ATP site. The AMPK pseudosubstrate motif lies at 300 to 321 (LFEAVYTLIKNRIHRLPVLDPV). ADP contacts are provided by residues 405-408 (SRFD), Arg-432, Leu-440, and 461-462 (HR). Residues 405-408 (SRFD), Arg-432, Leu-440, and 461-462 (HR) each bind ATP. Positions 435 to 494 (CLEGVLSCQPHETLGEVIDRIAREQVHRLVLVDETQHLLGVVSLSDILQALVLSPAGIDA) constitute a CBS 4 domain.

The protein belongs to the 5'-AMP-activated protein kinase gamma subunit family. In terms of assembly, AMPK is a heterotrimer of an alpha catalytic subunit (PRKAA1 or PRKAA2), a beta (PRKAB1 or PRKAB2) and a gamma non-catalytic subunits (PRKAG1, PRKAG2 or PRKAG3). Interacts with FNIP1 and FNIP2. In terms of processing, phosphorylated by ULK1; leading to negatively regulate AMPK activity and suggesting the existence of a regulatory feedback loop between ULK1 and AMPK. Glycosylated; O-GlcNAcylated by OGT, promoting the AMP-activated protein kinase (AMPK) activity.

AMP/ATP-binding subunit of AMP-activated protein kinase (AMPK), an energy sensor protein kinase that plays a key role in regulating cellular energy metabolism. In response to reduction of intracellular ATP levels, AMPK activates energy-producing pathways and inhibits energy-consuming processes: inhibits protein, carbohydrate and lipid biosynthesis, as well as cell growth and proliferation. AMPK acts via direct phosphorylation of metabolic enzymes, and by longer-term effects via phosphorylation of transcription regulators. AMPK also acts as a regulator of cellular polarity by remodeling the actin cytoskeleton; probably by indirectly activating myosin. The AMPK gamma3 subunit is a non-catalytic subunit with a regulatory role in muscle energy metabolism. It mediates binding to AMP, ADP and ATP, leading to AMPK activation or inhibition: AMP-binding results in allosteric activation of alpha catalytic subunit (PRKAA1 or PRKAA2) both by inducing phosphorylation and preventing dephosphorylation of catalytic subunits. ADP also stimulates phosphorylation, without stimulating already phosphorylated catalytic subunit. ATP promotes dephosphorylation of catalytic subunit, rendering the AMPK enzyme inactive. The sequence is that of 5'-AMP-activated protein kinase subunit gamma-3 (PRKAG3) from Bos taurus (Bovine).